A 305-amino-acid polypeptide reads, in one-letter code: UDP-3-O-acyl-N-acetylglucosamine deacetylase (305 aa).

Zn(2+) contacts are provided by His-79, His-238, and Asp-242. Catalysis depends on His-265, which acts as the Proton donor.

The protein belongs to the LpxC family. Zn(2+) is required as a cofactor.

It carries out the reaction a UDP-3-O-[(3R)-3-hydroxyacyl]-N-acetyl-alpha-D-glucosamine + H2O = a UDP-3-O-[(3R)-3-hydroxyacyl]-alpha-D-glucosamine + acetate. It functions in the pathway glycolipid biosynthesis; lipid IV(A) biosynthesis; lipid IV(A) from (3R)-3-hydroxytetradecanoyl-[acyl-carrier-protein] and UDP-N-acetyl-alpha-D-glucosamine: step 2/6. Functionally, catalyzes the hydrolysis of UDP-3-O-myristoyl-N-acetylglucosamine to form UDP-3-O-myristoylglucosamine and acetate, the committed step in lipid A biosynthesis. The protein is UDP-3-O-acyl-N-acetylglucosamine deacetylase of Actinobacillus succinogenes (strain ATCC 55618 / DSM 22257 / CCUG 43843 / 130Z).